A 109-amino-acid chain; its full sequence is Parvalbumin beta-1 (109 aa).

The residue at position 2 (S2) is an N-acetylserine. EF-hand domains follow at residues 39–74 (KSHEEVKKAFFVIDQDQSGFIEEDELKLFLQTFGAG) and 78–109 (LTAAETKAFLAAGDEDGDGMIGVDEFVTLVKA). Ca(2+)-binding residues include D52, D54, S56, F58, E60, E63, D91, D93, D95, M97, and E102.

It belongs to the parvalbumin family.

In terms of biological role, in muscle, parvalbumin is thought to be involved in relaxation after contraction. It binds two calcium ions. This is Parvalbumin beta-1 from Gadus chalcogrammus (Alaska pollock).